Here is a 1238-residue protein sequence, read N- to C-terminus: DNA-directed RNA polymerase subunit beta (1238 aa).

Residues 1187 to 1238 form a disordered region; sequence EGREDTPPEEVYEESYEEGFEEEIEELPEDIDFEPDSFDIENDDLDLEDFDI. Residues 1193-1238 show a composition bias toward acidic residues; sequence PPEEVYEESYEEGFEEEIEELPEDIDFEPDSFDIENDDLDLEDFDI.

It belongs to the RNA polymerase beta chain family. As to quaternary structure, the RNAP catalytic core consists of 2 alpha, 1 beta, 1 beta' and 1 omega subunit. When a sigma factor is associated with the core the holoenzyme is formed, which can initiate transcription.

The catalysed reaction is RNA(n) + a ribonucleoside 5'-triphosphate = RNA(n+1) + diphosphate. Functionally, DNA-dependent RNA polymerase catalyzes the transcription of DNA into RNA using the four ribonucleoside triphosphates as substrates. The sequence is that of DNA-directed RNA polymerase subunit beta from Thermoanaerobacter pseudethanolicus (strain ATCC 33223 / 39E) (Clostridium thermohydrosulfuricum).